The following is a 99-amino-acid chain: uncharacterized protein (99 aa).

This is an uncharacterized protein from Escherichia coli (strain K12).